The primary structure comprises 972 residues: Nuclear factor NF-kappa-B p105 subunit (972 aa).

The region spanning 39–246 is the RHD domain; that stretch reads ADGPYLQILE…DAIYDSKAPN (208 aa). C61 bears the S-nitrosocysteine; alternate mark. Residue C61 is the site of S-(15-deoxy-Delta12,14-prostaglandin J2-9-yl)cysteine; alternate attachment. A Glycyl lysine isopeptide (Lys-Gly) (interchain with G-Cter in SUMO2) cross-link involves residue K325. Phosphoserine; by PKA is present on S337. The short motif at 360–365 is the Nuclear localization signal element; that stretch reads QRKRQK. Positions 372–394 are GRR; it reads DSFGGGSGAGAGGGGMFGSGGGG. The segment at 425–473 is disordered; sequence KSNAGMKHGTIDTPSKNDSEGCGKNVDREAVNLSGKVTEPTEQDKESSM. An N6-acetyllysine; by EP300 mark is found at K431 and K440. The interaction with CFLAR stretch occupies residues 435-972; that stretch reads IDTPSKNDSE…GQEGPIEGKI (538 aa). Residues 439–454 are compositionally biased toward basic and acidic residues; the sequence is SKNDSEGCGKNVDREA. ANK repeat units lie at residues 539 to 568, 578 to 607, 611 to 640, 647 to 676, 681 to 711, and 715 to 744; these read NGDS…GLIS, LYQT…DLSL, LGNS…AALL, EGLN…DVNA, SGRT…HVDS, and DGTT…DPLV. The interval 647-681 is essential for interaction with HIF1AN; that stretch reads EGLNAIHIAVMSNSMPCLLLLVAAGADVNAQERKS. The residue at position 675 (N675) is a (3S)-3-hydroxyasparagine; by HIF1AN. S756 bears the Phosphoserine mark. The stretch at 768 to 798 is one ANK 7 repeat; the sequence is PGTTPLDMATNWQVFDILNGKPYEPEFTSDD. One can recognise a Death domain in the interval 814–889; sequence LQLYKLLEIP…EAIEVIQAAF (76 aa). Residues 894 to 926 form a disordered region; sequence TAAPSPGKGAPQTLSLPLSSASTRSPVDEVRDD. Positions 905 to 918 are enriched in polar residues; sequence QTLSLPLSSASTRS. A phosphoserine; by GSK3-beta; in vitro mark is found at S908 and S912. S927 bears the Phosphoserine mark. A phosphoserine; by IKKB mark is found at S931 and S936. Position 941 is a phosphoserine (S941). Phosphothreonine is present on T947.

As to quaternary structure, component of the NF-kappa-B p65-p50 complex. Homodimer; component of the NF-kappa-B p50-p50 complex. Component of the NF-kappa-B p105-p50 complex. Component of the NF-kappa-B p50-c-Rel complex. Component of a complex consisting of the NF-kappa-B p50-p50 homodimer and BCL3. Also interacts with MAP3K8. NF-kappa-B p50 subunit interacts with NCOA3 coactivator, which may coactivate NF-kappa-B dependent expression via its histone acetyltransferase activity. Interacts with TSC22D3; this interaction prevents nuclear translocation and DNA-binding. Interacts with SPAG9 and UNC5CL. NFKB1/p105 interacts with CFLAR; the interaction inhibits p105 processing into p50. NFKB1/p105 forms a ternary complex with MAP3K8 and TNIP2. Interacts with GSK3B; the interaction prevents processing of p105 to p50. NFKB1/p50 interacts with NFKBIE. NFKB1/p50 interacts with NFKBIZ. Nuclear factor NF-kappa-B p50 subunit interacts with NFKBID. Directly interacts with MEN1. Interacts with HIF1AN. Interacts with FEM1A; interaction is direct. Post-translationally, generation of the NF-kappa-B p50 (Nuclear factor NF-kappa-B p50 subunit) transcription factor takes place both cotranslationally and post-translationally via non-mutually exclusive mechanisms. A cotranslational processing allows the production of both p50 and p105 (Nuclear factor NF-kappa-B p105 subunit) from a single NFKB1 mRNA. While translation occurs, the particular unfolded structure after the GRR repeat region acts as a substrate for the proteasome, promoting degradation of the C-terminus. The GRR acts as a proteasomal 'stop signal', protecting the region upstream of the GRR from degradation and promoting generation of p50. It is unclear if limited proteasome degradation during cotranslational processing depends on ubiquitination. NF-kappa-B p50 is also generated post-translationally following ubiquitination by the KPC complex, leading to limited processing by the proteasome downstream of the GRR region, thereby generating p50. In terms of processing, phosphorylation at the C-terminus by IKBKB/IKKB acts as a signal for ubiquitination and promotes either complete degradation or processing to generate the NF-kappa-B p50 (Nuclear factor NF-kappa-B p50 subunit). Phosphorylation at Ser-908 and Ser-912 primes p105 for proteolytic processing in response to TNF-alpha stimulation. Phosphorylation at Ser-927, Ser-931 and Ser-936 are required for BTRC/BTRCP-mediated ubiquitination and proteolysis. Phosphorylation at Ser-931 is also required for ubiquitination by the KPC complex and limited processing to generate NF-kappa-B p50 (Nuclear factor NF-kappa-B p50 subunit). Polyubiquitinated at multiple Lys residues in the C-terminus. Polyubiquitinated by the SCF(FBXW11) and SCF(BTRC) complexes following phosphorylation at Ser-923, Ser-927, Ser-931 and Ser-936, leading to its complete degradation. In contrast, polyubiquitination by the KPC complex following phosphorylation at Ser-931 leads to limited proteosomal processing and generation of the active NF-kappa-B p50 (Nuclear factor NF-kappa-B p50 subunit). Post-translationally, S-nitrosylation of Cys-61 affects DNA binding. In terms of processing, the covalent modification of cysteine by 15-deoxy-Delta12,14-prostaglandin-J2 is autocatalytic and reversible. It may occur as an alternative to other cysteine modifications, such as S-nitrosylation and S-palmitoylation.

It is found in the cytoplasm. Its subcellular location is the nucleus. In terms of biological role, NF-kappa-B is a pleiotropic transcription factor present in almost all cell types and is the endpoint of a series of signal transduction events that are initiated by a vast array of stimuli related to many biological processes such as inflammation, immunity, differentiation, cell growth, tumorigenesis and apoptosis. NF-kappa-B is a homo- or heterodimeric complex formed by the Rel-like domain-containing proteins RELA/p65, RELB, NFKB1/p105, NFKB1/p50, REL and NFKB2/p52 and the heterodimeric p65-p50 complex appears to be most abundant one. The dimers bind at kappa-B sites in the DNA of their target genes and the individual dimers have distinct preferences for different kappa-B sites that they can bind with distinguishable affinity and specificity. Different dimer combinations act as transcriptional activators or repressors, respectively. NF-kappa-B is controlled by various mechanisms of post-translational modification and subcellular compartmentalization as well as by interactions with other cofactors or corepressors. NF-kappa-B complexes are held in the cytoplasm in an inactive state complexed with members of the NF-kappa-B inhibitor (I-kappa-B) family. In a conventional activation pathway, I-kappa-B is phosphorylated by I-kappa-B kinases (IKKs) in response to different activators, subsequently degraded thus liberating the active NF-kappa-B complex which translocates to the nucleus. NF-kappa-B heterodimeric p65-p50 and RelB-p50 complexes are transcriptional activators. The NF-kappa-B p50-p50 homodimer is a transcriptional repressor, but can act as a transcriptional activator when associated with BCL3. NFKB1 appears to have dual functions such as cytoplasmic retention of attached NF-kappa-B proteins by p105 and generation of p50 by a cotranslational processing. The proteasome-mediated process ensures the production of both p50 and p105 and preserves their independent function, although processing of NFKB1/p105 also appears to occur post-translationally. p50 binds to the kappa-B consensus sequence 5'-GGRNNYYCC-3', located in the enhancer region of genes involved in immune response and acute phase reactions. In a complex with MAP3K8, NFKB1/p105 represses MAP3K8-induced MAPK signaling; active MAP3K8 is released by proteasome-dependent degradation of NFKB1/p105. P105 is the precursor of the active p50 subunit (Nuclear factor NF-kappa-B p50 subunit) of the nuclear factor NF-kappa-B. Acts as a cytoplasmic retention of attached NF-kappa-B proteins by p105. Functionally, constitutes the active form, which associates with RELA/p65 to form the NF-kappa-B p65-p50 complex to form a transcription factor. Together with RELA/p65, binds to the kappa-B consensus sequence 5'-GGRNNYYCC-3', located in the enhancer region of genes involved in immune response and acute phase reactions. The polypeptide is Nuclear factor NF-kappa-B p105 subunit (NFKB1) (Canis lupus familiaris (Dog)).